Reading from the N-terminus, the 149-residue chain is Prefoldin subunit alpha (149 aa).

The protein belongs to the prefoldin subunit alpha family. As to quaternary structure, heterohexamer of two alpha and four beta subunits.

The protein localises to the cytoplasm. In terms of biological role, molecular chaperone capable of stabilizing a range of proteins. Seems to fulfill an ATP-independent, HSP70-like function in archaeal de novo protein folding. The chain is Prefoldin subunit alpha from Methanospirillum hungatei JF-1 (strain ATCC 27890 / DSM 864 / NBRC 100397 / JF-1).